The sequence spans 77 residues: ATP synthase subunit c (77 aa).

The next 2 helical transmembrane spans lie at 10–30 (IAVALLIGFGAIGTAVGFGNM) and 57–77 (GLIDAVAMIGVGIAMVLLFVL).

It belongs to the ATPase C chain family. F-type ATPases have 2 components, F(1) - the catalytic core - and F(0) - the membrane proton channel. F(1) has five subunits: alpha(3), beta(3), gamma(1), delta(1), epsilon(1). F(0) has three main subunits: a(1), b(2) and c(10-14). The alpha and beta chains form an alternating ring which encloses part of the gamma chain. F(1) is attached to F(0) by a central stalk formed by the gamma and epsilon chains, while a peripheral stalk is formed by the delta and b chains.

The protein localises to the cell inner membrane. Functionally, f(1)F(0) ATP synthase produces ATP from ADP in the presence of a proton or sodium gradient. F-type ATPases consist of two structural domains, F(1) containing the extramembraneous catalytic core and F(0) containing the membrane proton channel, linked together by a central stalk and a peripheral stalk. During catalysis, ATP synthesis in the catalytic domain of F(1) is coupled via a rotary mechanism of the central stalk subunits to proton translocation. Key component of the F(0) channel; it plays a direct role in translocation across the membrane. A homomeric c-ring of between 10-14 subunits forms the central stalk rotor element with the F(1) delta and epsilon subunits. The protein is ATP synthase subunit c of Pseudoalteromonas translucida (strain TAC 125).